The following is a 443-amino-acid chain: Na(+)-translocating NADH-quinone reductase subunit A (443 aa).

This sequence belongs to the NqrA family. Composed of six subunits; NqrA, NqrB, NqrC, NqrD, NqrE and NqrF.

It catalyses the reaction a ubiquinone + n Na(+)(in) + NADH + H(+) = a ubiquinol + n Na(+)(out) + NAD(+). Functionally, NQR complex catalyzes the reduction of ubiquinone-1 to ubiquinol by two successive reactions, coupled with the transport of Na(+) ions from the cytoplasm to the periplasm. NqrA to NqrE are probably involved in the second step, the conversion of ubisemiquinone to ubiquinol. The sequence is that of Na(+)-translocating NADH-quinone reductase subunit A from Actinobacillus succinogenes (strain ATCC 55618 / DSM 22257 / CCUG 43843 / 130Z).